The following is a 599-amino-acid chain: Sodium-dependent phosphate transport protein 2C (599 aa).

At 1-76 (MPSSLPGSQV…RRVAGSVLKA (76 aa)) the chain is on the cytoplasmic side. Ser4 is subject to Phosphoserine. Residues 77–97 (CGLLGSLYFFICSLDVLSSAF) form a helical membrane-spanning segment. Residues 98-111 (QLLGSKVAGDIFKD) are Extracellular-facing. The chain crosses the membrane as a helical span at residues 112-132 (NVVLSNPVAGLVIGVLVTALV). Residues 133–188 (QSSSTSSSIVVSMVAAKLLTVRVSVPIIMGVNVGTSITSTLVSMAQSGDRDEFQRA) are Cytoplasmic-facing. Residues 189-209 (FSGSAVHGIFNWLTVLVLLPL) form a helical membrane-spanning segment. Topologically, residues 210 to 322 (ESATALLERL…FAGTELTDLA (113 aa)) are extracellular. N-linked (GlcNAc...) asparagine glycosylation is found at Asn265, Asn268, Asn286, and Asn299. A disulfide bridge links Cys276 with Cys309. The chain crosses the membrane as a helical span at residues 323–343 (VGCILLAGSLLVLCGCLVLIV). The Cytoplasmic segment spans residues 344–367 (KLLNSVLRGRVAQVVRTVINADFP). Residues 368-388 (FPLGWLGGYLAVLAGAGLTFA) form a helical membrane-spanning segment. The Extracellular portion of the chain corresponds to 389-445 (LQSSSVFTAAVVPLMGVGVISLDRAYPLLLGSNIGTTTTALLAALASPADRMLSALQ). Residues 446 to 466 (VALIHFFFNLAGILLWYLVPA) form a helical membrane-spanning segment. Residues 467–485 (LRLPIPLARHFGVVTARYR) lie on the Cytoplasmic side of the membrane. A helical membrane pass occupies residues 486–506 (WVAGVYLLLGFLLLPLAAFGL). Topologically, residues 507 to 510 (SLAG) are extracellular. Residues 511 to 531 (GMELAAVGGPLVGLVLLVILV) form a helical membrane-spanning segment. Over 532–599 (TVLQRRRPAW…NPEILASQQL (68 aa)) the chain is Cytoplasmic.

It belongs to the SLC34A transporter family. Expressed only in the kidney.

The protein localises to the apical cell membrane. The enzyme catalyses 2 Na(+)(out) + phosphate(out) = 2 Na(+)(in) + phosphate(in). In terms of biological role, involved in actively transporting phosphate into cells via Na(+) cotransport in the renal brush border membrane. The cotransport has a Na(+):Pi stoichiometry of 2:1 and is electroneutral. The sequence is that of Sodium-dependent phosphate transport protein 2C (SLC34A3) from Homo sapiens (Human).